The chain runs to 392 residues: Outer membrane protein assembly factor BamB (392 aa).

The signal sequence occupies residues 1 to 19 (MQLRKLLLPGLLSVTLLSG). C20 carries N-palmitoyl cysteine lipidation. Residue C20 is the site of S-diacylglycerol cysteine attachment.

Belongs to the BamB family. As to quaternary structure, part of the Bam complex, which is composed of the outer membrane protein BamA, and four lipoproteins BamB, BamC, BamD and BamE. Monomer. Interacts directly with BamA. The Bam complex has the shape of a hat, with the BamA beta-barrel crown in the outer membrane and the periplasmic brim formed by the BamA POTRA domains and the 4 lipoproteins.

It is found in the cell outer membrane. Functionally, part of the outer membrane protein assembly complex (Bam), which is involved in assembly and insertion of beta-barrel proteins into the outer membrane. Nonessential member of the complex, which may orient the flexible periplasmic domain of BamA for interaction with other Bam components, chaperones and nascent outer membrane proteins. Efficient substrate folding and insertion into the outer membrane requires all 5 subunits. A lateral gate may open between the first and last strands of the BamA beta-barrel that allows substrate to insert into the outer membrane; comparison of the structures of complete and nearly complete Bam complexes show there is considerable movement of all 5 proteins. This Escherichia coli (strain K12) protein is Outer membrane protein assembly factor BamB.